The sequence spans 398 residues: Alpha-2,8-sialyltransferase 8F (398 aa).

Residues 1-3 are Cytoplasmic-facing; the sequence is MRP. Residues 4–24 form a helical; Signal-anchor for type II membrane protein membrane-spanning segment; that stretch reads GGALLALLASLLLLLLLRLLW. At 25 to 398 the chain is on the lumenal side; the sequence is CPADAPGRAR…KLQFSKCEVA (374 aa). Residues asparagine 66, asparagine 93, asparagine 151, and asparagine 196 are each glycosylated (N-linked (GlcNAc...) asparagine). 2 disulfide bridges follow: cysteine 186-cysteine 335 and cysteine 200-cysteine 395. Substrate-binding positions include asparagine 214, 236-238, and 322-324; these read NPS and STG. The active-site Proton donor/acceptor is the histidine 370.

Belongs to the glycosyltransferase 29 family.

Its subcellular location is the golgi apparatus membrane. The catalysed reaction is a ganglioside GM3 + CMP-N-acetyl-beta-neuraminate = a ganglioside GD3 + CMP + H(+). The enzyme catalyses a ganglioside GM3 (d18:1(4E)) + CMP-N-acetyl-beta-neuraminate = a ganglioside GD3 (d18:1(4E)) + CMP + H(+). It carries out the reaction a ganglioside GD1a (d18:1(4E)) + CMP-N-acetyl-beta-neuraminate = a ganglioside GT1a (d18:1(4E)) + CMP + H(+). It catalyses the reaction a ganglioside GD1a + CMP-N-acetyl-beta-neuraminate = a ganglioside GT1a + CMP + H(+). The catalysed reaction is a ganglioside GM1b (d18:1(4E)) + CMP-N-acetyl-beta-neuraminate = a ganglioside GD1c (d18:1(4E)) + CMP + H(+). The enzyme catalyses a ganglioside GM1b + CMP-N-acetyl-beta-neuraminate = a ganglioside GD1c + CMP + H(+). It carries out the reaction a ganglioside GM4 (d18:1(4E)) + CMP-N-acetyl-beta-neuraminate = an N-acetyl-alpha-neuraminosyl-(2-&gt;8)-N-acetyl-alpha-neuraminosyl-(2-&gt;3)-beta-D-galactosyl-(1&lt;-&gt;1')-N-acylsphing-4-enine + CMP + H(+). It catalyses the reaction N-acetyl-alpha-neuraminosyl-(2-&gt;3)-beta-D-galactosyl-(1&lt;-&gt;1')-ceramide + CMP-N-acetyl-beta-neuraminate = N-acetyl-alpha-neuraminosyl-(2-&gt;8)-N-acetyl-alpha-neuraminosyl-(2-&gt;3)-beta-D-galactosyl-(1&lt;-&gt;1')-ceramide + CMP + H(+). The catalysed reaction is a ganglioside GT1b (d18:1(4E)) + CMP-N-acetyl-beta-neuraminate = a ganglioside GQ1b (d18:1(4E)) + CMP + H(+). The enzyme catalyses a ganglioside GT1b + CMP-N-acetyl-beta-neuraminate = a ganglioside GQ1b + CMP + H(+). It participates in protein modification; protein glycosylation. Its function is as follows. Alpha-2,8-sialyltransferase that prefers O-glycans to N-glycans or glycolipids as acceptor substrates. The minimal acceptor substrate is the NeuAc-alpha-2,3(6)-Gal sequence at the non-reducing end of their carbohydrate groups. The protein is Alpha-2,8-sialyltransferase 8F (ST8SIA6) of Pan troglodytes (Chimpanzee).